The sequence spans 459 residues: Cysteine--tRNA ligase (459 aa).

Cys-28 provides a ligand contact to Zn(2+). The 'HIGH' region signature appears at 30 to 40 (VTIYDLCHIGH). Zn(2+) is bound by residues Cys-209, His-234, and Glu-238. Residues 266 to 270 (KMSKS) carry the 'KMSKS' region motif. Lys-269 serves as a coordination point for ATP.

This sequence belongs to the class-I aminoacyl-tRNA synthetase family. In terms of assembly, monomer. Zn(2+) is required as a cofactor.

The protein resides in the cytoplasm. The catalysed reaction is tRNA(Cys) + L-cysteine + ATP = L-cysteinyl-tRNA(Cys) + AMP + diphosphate. The protein is Cysteine--tRNA ligase of Shewanella baltica (strain OS223).